Reading from the N-terminus, the 147-residue chain is UPF0310 protein in gntR 5'region (147 aa).

The protein belongs to the UPF0310 family.

This is UPF0310 protein in gntR 5'region (oug) from Bacillus licheniformis.